Consider the following 312-residue polypeptide: Ribosomal RNA small subunit methyltransferase H (312 aa).

S-adenosyl-L-methionine-binding positions include 35–37 (GGH), Asp-55, Phe-80, Asp-102, and Gln-109.

The protein belongs to the methyltransferase superfamily. RsmH family.

The protein localises to the cytoplasm. It catalyses the reaction cytidine(1402) in 16S rRNA + S-adenosyl-L-methionine = N(4)-methylcytidine(1402) in 16S rRNA + S-adenosyl-L-homocysteine + H(+). Functionally, specifically methylates the N4 position of cytidine in position 1402 (C1402) of 16S rRNA. This Pseudoalteromonas translucida (strain TAC 125) protein is Ribosomal RNA small subunit methyltransferase H.